We begin with the raw amino-acid sequence, 877 residues long: (E,E)-geranyllinalool synthase (877 aa).

The Mg(2+) site is built by Asp540 and Asp544. Substrate contacts are provided by Asp540, Asp544, Arg677, and Asn680. The short motif at 540–544 (DDFFD) is the DDXXD motif element. Residues Asn680, Ser684, and Glu688 each contribute to the Mg(2+) site.

It belongs to the terpene synthase family. Tpsf subfamily. The cofactor is Mg(2+). It depends on Mn(2+) as a cofactor. As to expression, expressed in leaves and flowers.

It localises to the cytoplasm. It carries out the reaction (2E,6E,10E)-geranylgeranyl diphosphate + H2O = (6E,10E)-geranyllinalool + diphosphate. Its pathway is secondary metabolite biosynthesis; terpenoid biosynthesis. Involved in the biosynthesis of homoterpenes, attractants of herbivores parasitoids and predators (e.g. predatory mites and parasitoid wasps). Involved in diterpene (C20) biosynthesis. Catalyzes the conversion of geranylgeranyl diphosphate to (E,E)-geranyllinalool, the precursor of the insect-induced volatile C16-homoterpene TMTT. The protein is (E,E)-geranyllinalool synthase of Arabidopsis thaliana (Mouse-ear cress).